The primary structure comprises 500 residues: Maintenance of mitochondrial morphology protein 1 (500 aa).

The Lumenal portion of the chain corresponds to 1–42 (MATQVATPLSPSYTSELIIVCHHVLQHSPTPLTPHSLSFTQG). Residues 43-63 (FLLGQLSIALLIFFFIKFFIF) form a helical membrane-spanning segment. Topologically, residues 64–500 (GEPPSADDRS…PGALAPGTFR (437 aa)) are cytoplasmic. The SMP-LTD domain occupies 141–375 (QPESLDWFNV…EPRFQQIVLP (235 aa)). Composition is skewed to low complexity over residues 283-294 (SSSPPSTSTTTP) and 302-316 (NSTT…HRPT). 2 disordered regions span residues 283 to 316 (SSSP…HRPT) and 406 to 500 (EEEE…GTFR). Residues 406–415 (EEEEEEEEDG) are compositionally biased toward acidic residues. Basic and acidic residues predominate over residues 438 to 471 (EGAKLREAEIRAGVRKQERPGMSRAQTSREEGVR).

The protein belongs to the MMM1 family. In terms of assembly, homodimer. Component of the ER-mitochondria encounter structure (ERMES) or MDM complex, composed of MMM1, MDM10, MDM12 and MDM34. An MMM1 homodimer associates with one molecule of MDM12 on each side in a pairwise head-to-tail manner, and the SMP-LTD domains of MMM1 and MDM12 generate a continuous hydrophobic tunnel for phospholipid trafficking.

Its subcellular location is the endoplasmic reticulum membrane. Its function is as follows. Component of the ERMES/MDM complex, which serves as a molecular tether to connect the endoplasmic reticulum (ER) and mitochondria. Components of this complex are involved in the control of mitochondrial shape and protein biogenesis, and function in nonvesicular lipid trafficking between the ER and mitochondria. The MDM12-MMM1 subcomplex functions in the major beta-barrel assembly pathway that is responsible for biogenesis of all outer membrane beta-barrel proteins, and acts in a late step after the SAM complex. The MDM10-MDM12-MMM1 subcomplex further acts in the TOM40-specific pathway after the action of the MDM12-MMM1 complex. Essential for establishing and maintaining the structure of mitochondria and maintenance of mtDNA nucleoids. The chain is Maintenance of mitochondrial morphology protein 1 from Phaeosphaeria nodorum (strain SN15 / ATCC MYA-4574 / FGSC 10173) (Glume blotch fungus).